Consider the following 403-residue polypeptide: Ribosomal RNA large subunit methyltransferase I (403 aa).

A PUA domain is found at 9-88; that stretch reads YPRLVLSKGR…ESIDIAFFTR (80 aa).

This sequence belongs to the methyltransferase superfamily. RlmI family.

It localises to the cytoplasm. The catalysed reaction is cytidine(1962) in 23S rRNA + S-adenosyl-L-methionine = 5-methylcytidine(1962) in 23S rRNA + S-adenosyl-L-homocysteine + H(+). Its function is as follows. Specifically methylates the cytosine at position 1962 (m5C1962) of 23S rRNA. This is Ribosomal RNA large subunit methyltransferase I from Salmonella choleraesuis (strain SC-B67).